Here is a 116-residue protein sequence, read N- to C-terminus: Distal membrane-arm assembly complex protein 1 (116 aa).

The tract at residues 1–39 (MGSRLSQPFESYITAPPGTAAAPAKPAPPATPGAPTSPA) is disordered. Residues 14 to 24 (TAPPGTAAAPA) are compositionally biased toward low complexity. Helical transmembrane passes span 52–69 (VLSG…YWVA) and 82–104 (WTIT…GIVV).

As to quaternary structure, interacts with incompletely assembled mitochondrial NADH:ubiquinone oxidoreductase complex (complex I).

It localises to the mitochondrion inner membrane. Its function is as follows. Required for the assembly of the mitochondrial NADH:ubiquinone oxidoreductase complex (complex I). Involved in the assembly of the distal region of complex I. The polypeptide is Distal membrane-arm assembly complex protein 1 (Homo sapiens (Human)).